The sequence spans 266 residues: Norfluorocurarine synthase 1 (266 aa).

Positions His-11–Ser-121 constitute an AB hydrolase-1 domain. Residues Ser-86, Asp-216, and His-244 contribute to the active site.

The protein belongs to the AB hydrolase superfamily. Homodimer.

The catalysed reaction is 17-dehydropreakuammicine + H2O = norfluorocurarine + methanol + CO2. Its pathway is alkaloid biosynthesis. Its function is as follows. Hydrolase involved in the biosynthesis of curare monoterpene indole alkaloids (MIAs), natural products such as diaboline, a pharmacologically active compound used to regulate blood pressure. Curare alkaloids act as animal glycine receptor antagonists. Catalyzes the conversion of dehydropreakuammicine to norfluorocurarine. This chain is Norfluorocurarine synthase 1, found in Strychnos sp.